The sequence spans 347 residues: Serpentine receptor class beta-2 (347 aa).

The next 7 helical transmembrane spans lie at 27–47 (IAQL…YIFL), 62–82 (FLLV…AFLF), 108–128 (GNLS…GFSI), 146–166 (FLGP…LYHV), 194–214 (FWEL…FLLV), 246–266 (LIVS…TIFV), and 288–308 (ITVP…LSFM).

This sequence belongs to the nematode receptor-like protein srb family.

Its subcellular location is the membrane. This is Serpentine receptor class beta-2 (srb-2) from Caenorhabditis elegans.